Reading from the N-terminus, the 607-residue chain is Fucose-1-phosphate guanylyltransferase (607 aa).

The interval 1–21 (MRAVRRGLREGGAMAAARDPP) is disordered.

As to expression, expressed in many tissues.

The protein resides in the cytoplasm. It carries out the reaction beta-L-fucose 1-phosphate + GTP + H(+) = GDP-beta-L-fucose + diphosphate. Its function is as follows. Catalyzes the formation of GDP-L-fucose from GTP and L-fucose-1-phosphate. Functions as a salvage pathway to reutilize L-fucose arising from the turnover of glycoproteins and glycolipids. In Homo sapiens (Human), this protein is Fucose-1-phosphate guanylyltransferase.